Consider the following 793-residue polypeptide: Phenylalanine--tRNA ligase beta subunit (793 aa).

In terms of domain architecture, tRNA-binding spans 40–159 (SKLNTKLVIG…MDEMVGREIS (120 aa)). The B5 domain occupies 401-476 (NYDNVYSITL…RLYGYDNIIE (76 aa)). Mg(2+) contacts are provided by D454, D460, E463, and E464. In terms of domain architecture, FDX-ACB spans 701 to 793 (SKFQKSTRDI…NLKELKVKVR (93 aa)).

It belongs to the phenylalanyl-tRNA synthetase beta subunit family. Type 1 subfamily. As to quaternary structure, tetramer of two alpha and two beta subunits. Mg(2+) is required as a cofactor.

The protein localises to the cytoplasm. It catalyses the reaction tRNA(Phe) + L-phenylalanine + ATP = L-phenylalanyl-tRNA(Phe) + AMP + diphosphate + H(+). In Mesoplasma florum (strain ATCC 33453 / NBRC 100688 / NCTC 11704 / L1) (Acholeplasma florum), this protein is Phenylalanine--tRNA ligase beta subunit.